Here is a 214-residue protein sequence, read N- to C-terminus: Killer cell lectin-like receptor subfamily B member 1 (214 aa).

Over 1–42 the chain is Cytoplasmic; the sequence is MDAPVLYAELNLAETRGLRCTSAPSLPQDACQGPGWHRVALK. A helical; Signal-anchor for type II membrane protein transmembrane segment spans residues 43–63; the sequence is LGCAGLIFLLMVLSVLVGFLV. Residues 64 to 214 are Extracellular-facing; the sequence is QKPLIEKCSV…WICQKTLKHV (151 aa). The region spanning 98 to 208 is the C-type lectin domain; it reads HCDKCLFTSQ…CSSDNHWICQ (111 aa). Intrachain disulfides connect Cys-119/Cys-207 and Cys-186/Cys-199.

The protein localises to the membrane. This Mus musculus (Mouse) protein is Killer cell lectin-like receptor subfamily B member 1 (Klrb1).